Reading from the N-terminus, the 193-residue chain is Potassium-transporting ATPase KdpC subunit (193 aa).

A helical membrane pass occupies residues 14 to 34; sequence ITFTFLVLCGLVYPLIVTGIA.

This sequence belongs to the KdpC family. In terms of assembly, the system is composed of three essential subunits: KdpA, KdpB and KdpC.

It is found in the cell membrane. Functionally, part of the high-affinity ATP-driven potassium transport (or Kdp) system, which catalyzes the hydrolysis of ATP coupled with the electrogenic transport of potassium into the cytoplasm. This subunit acts as a catalytic chaperone that increases the ATP-binding affinity of the ATP-hydrolyzing subunit KdpB by the formation of a transient KdpB/KdpC/ATP ternary complex. This Bacillus cereus (strain AH820) protein is Potassium-transporting ATPase KdpC subunit.